The following is a 195-amino-acid chain: Thymidine kinase (195 aa).

Residues 15-22 and 88-91 contribute to the ATP site; these read GSMFSGKS and DEVQ. Residue glutamate 89 is the Proton acceptor of the active site. Residue phenylalanine 120 coordinates substrate. Zn(2+) is bound by residues cysteine 145 and cysteine 148. Substrate-binding positions include 170-174 and tyrosine 179; that span reads IILVG. Zn(2+) is bound by residues cysteine 183 and cysteine 186.

The protein belongs to the thymidine kinase family. Homotetramer.

Its subcellular location is the cytoplasm. It catalyses the reaction thymidine + ATP = dTMP + ADP + H(+). The chain is Thymidine kinase from Bacillus cereus (strain ATCC 14579 / DSM 31 / CCUG 7414 / JCM 2152 / NBRC 15305 / NCIMB 9373 / NCTC 2599 / NRRL B-3711).